The primary structure comprises 186 residues: Elongation factor P (186 aa).

This sequence belongs to the elongation factor P family.

It localises to the cytoplasm. It participates in protein biosynthesis; polypeptide chain elongation. Functionally, involved in peptide bond synthesis. Stimulates efficient translation and peptide-bond synthesis on native or reconstituted 70S ribosomes in vitro. Probably functions indirectly by altering the affinity of the ribosome for aminoacyl-tRNA, thus increasing their reactivity as acceptors for peptidyl transferase. The polypeptide is Elongation factor P (Streptococcus agalactiae serotype Ia (strain ATCC 27591 / A909 / CDC SS700)).